We begin with the raw amino-acid sequence, 1081 residues long: Isoleucine--tRNA ligase (1081 aa).

The 'HIGH' region motif lies at 53–63 (PFATGLPHYGN). The 'KMSKS' region motif lies at 607–611 (KMSKS). Position 610 (lysine 610) interacts with ATP.

It belongs to the class-I aminoacyl-tRNA synthetase family.

It carries out the reaction tRNA(Ile) + L-isoleucine + ATP = L-isoleucyl-tRNA(Ile) + AMP + diphosphate. This is Isoleucine--tRNA ligase (ILSA) from Tetrahymena thermophila.